A 365-amino-acid polypeptide reads, in one-letter code: Histidine biosynthesis bifunctional protein HisB (365 aa).

Positions 1–176 (MTQQPTLFID…VADPKGLGQP (176 aa)) are histidinol-phosphatase. Catalysis depends on Asp-10, which acts as the Nucleophile. Mg(2+) is bound by residues Asp-10 and Asp-12. Catalysis depends on Asp-12, which acts as the Proton donor. Positions 93, 95, 101, and 103 each coordinate Zn(2+). Asp-130 is a binding site for Mg(2+). The imidazoleglycerol-phosphate dehydratase stretch occupies residues 177 to 365 (RHAVVARKTK…NEMPSSKGVL (189 aa)).

This sequence in the N-terminal section; belongs to the histidinol-phosphatase family. The protein in the C-terminal section; belongs to the imidazoleglycerol-phosphate dehydratase family. The cofactor is Mg(2+). Requires Zn(2+) as cofactor.

The protein localises to the cytoplasm. The enzyme catalyses D-erythro-1-(imidazol-4-yl)glycerol 3-phosphate = 3-(imidazol-4-yl)-2-oxopropyl phosphate + H2O. The catalysed reaction is L-histidinol phosphate + H2O = L-histidinol + phosphate. Its pathway is amino-acid biosynthesis; L-histidine biosynthesis; L-histidine from 5-phospho-alpha-D-ribose 1-diphosphate: step 6/9. It participates in amino-acid biosynthesis; L-histidine biosynthesis; L-histidine from 5-phospho-alpha-D-ribose 1-diphosphate: step 8/9. This chain is Histidine biosynthesis bifunctional protein HisB, found in Mannheimia succiniciproducens (strain KCTC 0769BP / MBEL55E).